Reading from the N-terminus, the 255-residue chain is Imidazole glycerol phosphate synthase subunit HisF (255 aa).

Active-site residues include D11 and D130.

This sequence belongs to the HisA/HisF family. Heterodimer of HisH and HisF.

It is found in the cytoplasm. It catalyses the reaction 5-[(5-phospho-1-deoxy-D-ribulos-1-ylimino)methylamino]-1-(5-phospho-beta-D-ribosyl)imidazole-4-carboxamide + L-glutamine = D-erythro-1-(imidazol-4-yl)glycerol 3-phosphate + 5-amino-1-(5-phospho-beta-D-ribosyl)imidazole-4-carboxamide + L-glutamate + H(+). The protein operates within amino-acid biosynthesis; L-histidine biosynthesis; L-histidine from 5-phospho-alpha-D-ribose 1-diphosphate: step 5/9. In terms of biological role, IGPS catalyzes the conversion of PRFAR and glutamine to IGP, AICAR and glutamate. The HisF subunit catalyzes the cyclization activity that produces IGP and AICAR from PRFAR using the ammonia provided by the HisH subunit. This Maricaulis maris (strain MCS10) (Caulobacter maris) protein is Imidazole glycerol phosphate synthase subunit HisF.